The chain runs to 123 residues: uncharacterized protein (123 aa).

The disordered stretch occupies residues 1-28 (MGLGSSKRKEEPPHKSEPKTVGRVKRAG). Basic and acidic residues predominate over residues 7-20 (KRKEEPPHKSEPKT).

Belongs to the TUSC2 family.

This is an uncharacterized protein from Caenorhabditis elegans.